A 328-amino-acid polypeptide reads, in one-letter code: Glycerol-3-phosphate dehydrogenase [NAD(P)+] (328 aa).

NADPH is bound by residues Trp-11, Arg-30, and Lys-103. 3 residues coordinate sn-glycerol 3-phosphate: Lys-103, Gly-132, and Ser-134. Residue Ala-136 participates in NADPH binding. 5 residues coordinate sn-glycerol 3-phosphate: Lys-187, Asp-240, Ser-250, Arg-251, and Asn-252. Lys-187 (proton acceptor) is an active-site residue. Arg-251 is an NADPH binding site. Positions 275 and 277 each coordinate NADPH.

This sequence belongs to the NAD-dependent glycerol-3-phosphate dehydrogenase family.

The protein resides in the cytoplasm. It carries out the reaction sn-glycerol 3-phosphate + NAD(+) = dihydroxyacetone phosphate + NADH + H(+). The catalysed reaction is sn-glycerol 3-phosphate + NADP(+) = dihydroxyacetone phosphate + NADPH + H(+). The protein operates within membrane lipid metabolism; glycerophospholipid metabolism. In terms of biological role, catalyzes the reduction of the glycolytic intermediate dihydroxyacetone phosphate (DHAP) to sn-glycerol 3-phosphate (G3P), the key precursor for phospholipid synthesis. This chain is Glycerol-3-phosphate dehydrogenase [NAD(P)+], found in Thiobacillus denitrificans (strain ATCC 25259 / T1).